The sequence spans 569 residues: Hexose transporter HXT8 (569 aa).

The segment at 1–38 is disordered; sequence MTDRKTNLPEEPIFEEAEDDGCPSIENSSHLSVPTVEE. The Cytoplasmic segment spans residues 1–61; the sequence is MTDRKTNLPE…EVVVPEKPAS (61 aa). Positions 12–21 are enriched in acidic residues; sequence PIFEEAEDDG. Residues 62 to 82 form a helical membrane-spanning segment; that stretch reads AYATVSIMCLCMAFGGFMSGW. Topologically, residues 83–118 are extracellular; sequence DTGTISGFVNQTDFLRRFGNYSHSKNTYYLSNVRTG. N-linked (GlcNAc...) asparagine glycosylation is found at N92 and N102. The helical transmembrane segment at 119–139 threads the bilayer; sequence LIVSIFNVGSAIGCLFLSKLG. The Cytoplasmic portion of the chain corresponds to 140–145; that stretch reads DIYGRC. A helical membrane pass occupies residues 146 to 166; that stretch reads MGLIIVIVVYMVGIVIQIASI. Residues 167–176 lie on the Extracellular side of the membrane; it reads DKWYQYFIGR. Residues 177–197 traverse the membrane as a helical segment; the sequence is IIAGIGAGSISVLAPMLISET. The Cytoplasmic segment spans residues 198 to 203; the sequence is APKHIR. The helical transmembrane segment at 204-224 threads the bilayer; the sequence is GTLLACWQLMVTFAIFLGYCT. Topologically, residues 225–238 are extracellular; sequence NYGTKTYSNSVQWR. The chain crosses the membrane as a helical span at residues 239–259; that stretch reads VPLGLCFAWAIIMIGGMTFVP. Over 260–342 the chain is Cytoplasmic; the sequence is ESPRFLVQVG…INSLQQLTGD (83 aa). Residues 343–359 form a helical membrane-spanning segment; that stretch reads NYFFYYGTTIFKSVGMN. Residues 360–365 lie on the Extracellular side of the membrane; it reads DSFETS. A helical transmembrane segment spans residues 366–383; sequence IVLGIVNFASCFFSLYSV. Topologically, residues 384–390 are cytoplasmic; the sequence is DKLGRRR. Residues 391–411 form a helical membrane-spanning segment; the sequence is CLLLGAATMTACMVIYASVGV. At 412–433 the chain is on the extracellular side; it reads TRLYPNGKSEPSSKGAGNCTIV. N-linked (GlcNAc...) asparagine glycosylation is present at N429. A helical transmembrane segment spans residues 434–454; the sequence is FTCFYIFCFSCTWGPVCYVII. Residues 455–471 are Cytoplasmic-facing; the sequence is SETFPLRVRSKCMSVAT. A helical membrane pass occupies residues 472 to 492; that stretch reads AANLLWGFLIGFFTPFITSAI. A topological domain (extracellular) is located at residue N493. A helical membrane pass occupies residues 494 to 514; the sequence is FYYGYVFMGCLAFSYFYVFFF. Residues 515-569 lie on the Cytoplasmic side of the membrane; the sequence is VPETKGLTLEEVDEMWMDGVLPWKSESWVPASRRDGDYDNEKLQHDEKPFYKRMF.

This sequence belongs to the major facilitator superfamily. Sugar transporter (TC 2.A.1.1) family.

Its subcellular location is the membrane. Probable glucose transporter. This chain is Hexose transporter HXT8 (HXT8), found in Saccharomyces cerevisiae (strain ATCC 204508 / S288c) (Baker's yeast).